Reading from the N-terminus, the 103-residue chain is MFAIIETGGKQYKVQQGDVLKVEKLEANPGDVVEIDRVFAVSKDGELKVGAPTVEGAKVLLKVEDHGKGKKIIIFKYKPKKNYRRKQGHRQAFTQVRVEAIQA.

Belongs to the bacterial ribosomal protein bL21 family. Part of the 50S ribosomal subunit. Contacts protein L20.

In terms of biological role, this protein binds to 23S rRNA in the presence of protein L20. This chain is Large ribosomal subunit protein bL21, found in Heliobacterium modesticaldum (strain ATCC 51547 / Ice1).